The following is a 159-amino-acid chain: Ribosomal RNA large subunit methyltransferase H (159 aa).

Residues Leu76, Gly108, and 127 to 132 (FSKMTF) contribute to the S-adenosyl-L-methionine site.

The protein belongs to the RNA methyltransferase RlmH family. As to quaternary structure, homodimer.

The protein resides in the cytoplasm. The catalysed reaction is pseudouridine(1915) in 23S rRNA + S-adenosyl-L-methionine = N(3)-methylpseudouridine(1915) in 23S rRNA + S-adenosyl-L-homocysteine + H(+). Functionally, specifically methylates the pseudouridine at position 1915 (m3Psi1915) in 23S rRNA. In Oceanobacillus iheyensis (strain DSM 14371 / CIP 107618 / JCM 11309 / KCTC 3954 / HTE831), this protein is Ribosomal RNA large subunit methyltransferase H.